Reading from the N-terminus, the 62-residue chain is Venom protein 51.1 (62 aa).

A signal peptide spans 1–25; sequence MKFFGILLIVTMVVLVMIATTYVES. Disulfide bonds link C32-C53, C39-C58, and C43-C60.

As to expression, expressed by the venom gland.

It is found in the secreted. Functionally, neurotoxin. Decreases the action potential of myelinated nerves in mice and frogs. The sequence is that of Venom protein 51.1 from Lychas mucronatus (Chinese swimming scorpion).